The primary structure comprises 85 residues: MAPPLSPGSRVLIALIRVYQRLISPLLGPHCRFTPTCSSYGIEALRRFGVIKGSWLTVKRVLKCHPLHPGGDDPVPPGPFDTREH.

The protein belongs to the UPF0161 family.

The protein resides in the cell inner membrane. Functionally, could be involved in insertion of integral membrane proteins into the membrane. This Escherichia fergusonii (strain ATCC 35469 / DSM 13698 / CCUG 18766 / IAM 14443 / JCM 21226 / LMG 7866 / NBRC 102419 / NCTC 12128 / CDC 0568-73) protein is Putative membrane protein insertion efficiency factor.